Here is a 216-residue protein sequence, read N- to C-terminus: Probable nicotinate-nucleotide adenylyltransferase (216 aa).

This sequence belongs to the NadD family.

The catalysed reaction is nicotinate beta-D-ribonucleotide + ATP + H(+) = deamido-NAD(+) + diphosphate. It participates in cofactor biosynthesis; NAD(+) biosynthesis; deamido-NAD(+) from nicotinate D-ribonucleotide: step 1/1. Catalyzes the reversible adenylation of nicotinate mononucleotide (NaMN) to nicotinic acid adenine dinucleotide (NaAD). This is Probable nicotinate-nucleotide adenylyltransferase from Klebsiella pneumoniae subsp. pneumoniae (strain ATCC 700721 / MGH 78578).